Reading from the N-terminus, the 447-residue chain is UMP-CMP kinase 2, mitochondrial (447 aa).

The transit peptide at Met-1–Tyr-73 directs the protein to the mitochondrion. Gly-259–Thr-266 is a binding site for ATP. Positions Glu-380 to Met-412 form a coiled coil.

This sequence belongs to the thymidylate kinase family. As to expression, strongly expressed in the brain.

The protein resides in the mitochondrion. It carries out the reaction CMP + ATP = CDP + ADP. The catalysed reaction is dCMP + ATP = dCDP + ADP. It catalyses the reaction a 2'-deoxyribonucleoside 5'-diphosphate + ATP = a 2'-deoxyribonucleoside 5'-triphosphate + ADP. The enzyme catalyses a ribonucleoside 5'-diphosphate + ATP = a ribonucleoside 5'-triphosphate + ADP. Functionally, mitochondrial nucleotide monophosphate kinase needed for salvage dNTP synthesis that mediates immunomodulatory and antiviral activities through IFN-dependent and IFN-independent pathways. Restricts the replication of multiple viruses including flaviviruses or coronaviruses. Together with viperin/RSAD2 and ddhCTP, suppresses the replication of several coronaviruses through inhibition of the viral RNA-dependent RNA polymerase activities. Concerning flaviviruses, restricts RNA translation when localized to the mitochondria independently of its kinase activity. Is able to phosphorylate dUMP, dCMP, CMP, UMP and monophosphates of the pyrimidine nucleoside analogs ddC, dFdC, araC, BVDU and FdUrd with ATP as phosphate donor. Efficacy is highest for dUMP followed by dCMP while CMP and UMP are poor substrates. Controls therefore mitochondrial DNA synthesis by supplying required deoxyribonucleotides. CMPK2-dependent mitochondrial DNA synthesis is necessary for the production of oxidized mitochondrial DNA fragments after exposure to NLRP3 activators. In turn, cytosolic oxidized mtDNA associates with the NLRP3 inflammasome complex and is required for its activation. The sequence is that of UMP-CMP kinase 2, mitochondrial (Cmpk2) from Mus musculus (Mouse).